A 383-amino-acid polypeptide reads, in one-letter code: Cytochrome b (383 aa).

The next 4 helical transmembrane spans lie at 30 to 50 (FGSLLGLCLGIQILTGVLLAM), 74 to 96 (WILRYVHANGASLFFICVYCHIG), 109 to 129 (TWIVGVLIYFIMMLTAFIGYV), and 175 to 195 (FFSLHYLLPFVLVGLVLAHLL). 2 residues coordinate heme b: His80 and His94. Heme b contacts are provided by His179 and His193. His198 contacts a ubiquinone. 4 consecutive transmembrane segments (helical) span residues 221–241 (FTIKDILGFLILLGVFVIIGI), 289–309 (GVLALFASILVLLLMPILDRS), 320–340 (AKFFFWFIVGDFFILTWIGSA), and 345–365 (EPYVLIGRIATIFYFGYFLVL).

The protein belongs to the cytochrome b family. The main subunits of complex b-c1 are: cytochrome b, cytochrome c1 and the Rieske protein. Requires heme b as cofactor.

Its subcellular location is the mitochondrion inner membrane. Component of the ubiquinol-cytochrome c reductase complex (complex III or cytochrome b-c1 complex) that is part of the mitochondrial respiratory chain. The b-c1 complex mediates electron transfer from ubiquinol to cytochrome c. Contributes to the generation of a proton gradient across the mitochondrial membrane that is then used for ATP synthesis. The protein is Cytochrome b (mt:Cyt-b) of Trichoplax adhaerens (Trichoplax reptans).